Reading from the N-terminus, the 927-residue chain is Small conductance calcium-activated potassium channel protein (927 aa).

A compositionally biased stretch (polar residues) spans 1–31 (MSIQKLNDTTNSGYVSSEETDSLLVSSSNPS). Disordered stretches follow at residues 1-131 (MSIQ…EDVE), 181-251 (LSLK…VKSA), and 296-336 (HLHQ…SSST). Residues 45–62 (SNSTNGPTTGASTSSSGS) are compositionally biased toward low complexity. Positions 63-77 (VSGGGGGSGSGGGSA) are enriched in gly residues. 2 stretches are compositionally biased toward polar residues: residues 95 to 107 (TSTYLTSPQQSQH) and 200 to 214 (NLGTSSYQNLASSIP). 2 stretches are compositionally biased toward low complexity: residues 219-232 (SRCRACRNCSRRAS) and 296-308 (HLHQQQLQQSQQQ). Residues 314 to 336 (ITSSPTNGSRIIRQSSQPESSST) show a composition bias toward polar residues. A helical membrane pass occupies residues 489–509 (ALVMGMFGIIVMVIENELSSA). Residues 530–550 (TVILLGLIVAYHALEVQLFMI) traverse the membrane as a helical segment. Residues 569 to 589 (IGLELFICAIHPIPGEYYFQW) traverse the membrane as a helical segment. Residues 609–629 (VALSLPMFLRLYLICRVMLLH) traverse the membrane as a helical segment. A helical transmembrane segment spans residues 658–678 (LMTICPGTVLLVFMVSLWIIA). Positions 696-716 (LLNSMWLTAITFLCVGYGDIV) form an intramembrane region, pore-forming. A helical membrane pass occupies residues 724 to 744 (GITLTCGMVGAGCTALLVAVV). The calmodulin-binding stretch occupies residues 763–839 (DTQLTKRLKN…ITDMAKTQNT (77 aa)).

The protein belongs to the potassium channel KCNN family. SK subfamily. Heterooligomer. The complex is composed of 4 channel subunits each of which binds to a calmodulin subunit which regulates the channel activity through calcium-binding.

The protein localises to the membrane. Functionally, forms a voltage-independent potassium channel activated by intracellular calcium. Activation is followed by membrane hyperpolarization. Thought to regulate neuronal excitability by contributing to the slow component of synaptic afterhyperpolarization. The channel is blocked by apamin. This is Small conductance calcium-activated potassium channel protein from Drosophila melanogaster (Fruit fly).